A 457-amino-acid chain; its full sequence is Argininosuccinate lyase (457 aa).

The protein belongs to the lyase 1 family. Argininosuccinate lyase subfamily.

The protein localises to the cytoplasm. The catalysed reaction is 2-(N(omega)-L-arginino)succinate = fumarate + L-arginine. It participates in amino-acid biosynthesis; L-arginine biosynthesis; L-arginine from L-ornithine and carbamoyl phosphate: step 3/3. This Yersinia pseudotuberculosis serotype IB (strain PB1/+) protein is Argininosuccinate lyase.